A 438-amino-acid polypeptide reads, in one-letter code: MTAPAAAIRRLDAREPEFLATLDALLAFEGGADARIDAAVSEILRAVRTTGDAAVLEYTRRFDHLDVKSMVQLELSKSELKAALDSLTVEQREALRVAADRVRVYHERQRAESWDYVEADGTRLGQKVTPLDRVGLYVPGGRASYPSSVLMNAIPAKVAGVGELIMVVPTPNGEKNPLVLAAAAITGVDRVFTIGGAQAVAALAYGTQTLPQVDKIVGPGNAYVAEAKRRVFGTVGIDMVAGPSEVLIISDGSGQAGWVAMDLFAQAEHDELAQSILLCTDAGFIDAVAASIERLLPSMPRRETIAASLANRGALIHVDSLEQACAIANRIAPEHLELSLDDAEPWIGRIRHAGAIFVGHWSVEALGDYCAGPNHVLPTMRSARFSSPLGVYDFQKRTSIVQISEAGAQTLGRVASILARGEGLQAHARSAEMRLHDR.

Y137, Q198, and N221 together coordinate NAD(+). 3 residues coordinate substrate: S244, Q266, and H269. Residues Q266 and H269 each coordinate Zn(2+). Catalysis depends on proton acceptor residues E334 and H335. Positions 335, 368, 422, and 427 each coordinate substrate. D368 is a Zn(2+) binding site. H427 lines the Zn(2+) pocket.

It belongs to the histidinol dehydrogenase family. The cofactor is Zn(2+).

The catalysed reaction is L-histidinol + 2 NAD(+) + H2O = L-histidine + 2 NADH + 3 H(+). It functions in the pathway amino-acid biosynthesis; L-histidine biosynthesis; L-histidine from 5-phospho-alpha-D-ribose 1-diphosphate: step 9/9. In terms of biological role, catalyzes the sequential NAD-dependent oxidations of L-histidinol to L-histidinaldehyde and then to L-histidine. This Aromatoleum aromaticum (strain DSM 19018 / LMG 30748 / EbN1) (Azoarcus sp. (strain EbN1)) protein is Histidinol dehydrogenase.